The sequence spans 333 residues: DNA-directed RNA polymerase subunit alpha (333 aa).

Positions 1–233 (MVQEKLRFST…DLFIPFLHAE (233 aa)) are alpha N-terminal domain (alpha-NTD). The segment at 266–333 (KKEIALKSIF…DILKIQKYFT (68 aa)) is alpha C-terminal domain (alpha-CTD).

Belongs to the RNA polymerase alpha chain family. As to quaternary structure, in plastids the minimal PEP RNA polymerase catalytic core is composed of four subunits: alpha, beta, beta', and beta''. When a (nuclear-encoded) sigma factor is associated with the core the holoenzyme is formed, which can initiate transcription.

The protein resides in the plastid. It is found in the chloroplast. It carries out the reaction RNA(n) + a ribonucleoside 5'-triphosphate = RNA(n+1) + diphosphate. Functionally, DNA-dependent RNA polymerase catalyzes the transcription of DNA into RNA using the four ribonucleoside triphosphates as substrates. The protein is DNA-directed RNA polymerase subunit alpha of Phaseolus angularis (Azuki bean).